Reading from the N-terminus, the 575-residue chain is MKTKGKVVGVNGNLVTIEVEGSVSMNEVLFIKTAGRNLKAEIIRVRGNEVDAQVFELTKGISVGDVVEFTDKLLTVELGPGLLTQVYDGLQNPLPELAIQCGFFLERGVYLRPLNKDKKWNFKKTAKVGDSVIAGDFLGFVIEGTVHHQIMIPFYKRDSYKIVEIVNDGNYSIDEQIAVIEDDSGMKHSITMSFHWPVKIPITNYKERLIPSEPMLTQTRIIDTFFPVAKGGTFCIPGPFGAGKTVLQQVTSRNADVDIVIIAACGERAGEVVETLKEFPELIDPKTGKSLMDRTCIICNTSSMPVAAREASVYTAITIGEYYRQMGLDILLLADSTSRWAQAMREMSGRLEEIPGEEAFPAYLESVIASFYERAGIVVLNNGDIGSVTVGGSVSPAGGNFEEPVTQATLKVVGAFHGLTRERSDARKFPAISPLESWSKYKGVIDSKKAEYARSFLVKGNEINQMMKVVGEEGISSEDFLIYLKSELLDSCYLQQNSFDSVDAAVSSERQNYMFDIVYNILKTNFEFSDKLQARDFMNELRQNLLDMNLSSFKDYKFNKLEQALSELVNLKKVI.

238–245 is a binding site for ATP; it reads GPFGAGKT.

This sequence belongs to the ATPase alpha/beta chains family.

The catalysed reaction is ATP + H2O + 4 H(+)(in) = ADP + phosphate + 5 H(+)(out). Its function is as follows. Produces ATP from ADP in the presence of a proton gradient across the membrane. The V-type alpha chain is a catalytic subunit. This chain is V-type ATP synthase alpha chain, found in Borrelia garinii subsp. bavariensis (strain ATCC BAA-2496 / DSM 23469 / PBi) (Borreliella bavariensis).